Here is a 122-residue protein sequence, read N- to C-terminus: MNNSLKKEERVEEDNGKSDGNRGKPSTEVVRTVTEEEVDEFFKILRRVHVATRTVAKVNGGVAEGELPSKKRKRSQNLGLRNSLDCNGVRDGEFDEINRVGLQGLGLDLNCKPEPDSVSLSL.

The span at 1-22 (MNNSLKKEERVEEDNGKSDGNR) shows a compositional bias: basic and acidic residues. The interval 1–28 (MNNSLKKEERVEEDNGKSDGNRGKPSTE) is disordered. Residues 39-45 (DEFFKIL) form an involved in NPR1/NIM1 interaction region. The Nuclear localization signal motif lies at 70 to 74 (KKRKR).

In terms of assembly, interacts with NPR1 N-terminal region.

The protein localises to the nucleus. This is Protein NIM1-INTERACTING 2 from Arabidopsis thaliana (Mouse-ear cress).